The sequence spans 161 residues: CASP-like protein 1C2 (161 aa).

At 1-7 the chain is on the cytoplasmic side; sequence MAKNTDR. The chain crosses the membrane as a helical span at residues 8–28; it reads ICFLVLRLLAFGATLSAAIVM. Residues 29 to 53 are Extracellular-facing; it reads ATSHERTTYLSLSIEAKYSHTPAFK. Residues 54 to 74 traverse the membrane as a helical segment; it reads YFVIANAIGSAYSLLLLFLPS. Residues 75–86 lie on the Cytoplasmic side of the membrane; the sequence is HGSLWPLVIASD. A helical membrane pass occupies residues 87-107; the sequence is VVITMFLTSSISAALSIAYVG. The Extracellular segment spans residues 108–131; the sequence is KKGNSYAGWLPICDQVPNYCNHVT. Residues 132 to 152 traverse the membrane as a helical segment; it reads GALAAGFIGVVLYMVLLQYSI. Topologically, residues 153–161 are cytoplasmic; that stretch reads YTKCCKSSS.

This sequence belongs to the Casparian strip membrane proteins (CASP) family. Homodimer and heterodimers.

It is found in the cell membrane. The sequence is that of CASP-like protein 1C2 from Vitis vinifera (Grape).